A 663-amino-acid polypeptide reads, in one-letter code: Telomere length regulator taz1 (663 aa).

Positions 15-72 (ENEGDQQFDKEVVQNSDSNIETGQISDSLTKAVEERAETESSSNLSNFTTSESESSKP) are disordered. Composition is skewed to polar residues over residues 27–43 (VQNS…SDSL) and 54–67 (ESSS…TSES). Ser332 carries the phosphoserine modification. 2 disordered regions span residues 389–412 (GSTA…TFSE) and 471–554 (RAKS…PYEG). 2 stretches are compositionally biased toward basic and acidic residues: residues 489-498 (KRGDNLRREA) and 512-524 (PPVR…ESRS). The Myb-like domain occupies 556-612 (RTRRKWTDEEENELYEMISQHGCCWSKIIHIQKLENGPLKTFGPTQIKDKARLIKAR).

As to quaternary structure, interacts with taf1 via the Myb domain, and ccq1.

It is found in the cytoplasm. The protein localises to the nucleus. It localises to the chromosome. Its subcellular location is the telomere. Its function is as follows. Regulates telomere length and function. Required for the repression of telomere-adjacent gene expression and for normal meiosis or sporulation. It may be a negative regulator of the telomere-replicating enzyme, telomerase, or may protect against activation of telomerase-independent pathways of telomere elongation. It may be involved in the interactions between chromosomes and spindle proteins, disruption of these interactions would lead to defective meiosis. The chain is Telomere length regulator taz1 (taz1) from Schizosaccharomyces pombe (strain 972 / ATCC 24843) (Fission yeast).